Reading from the N-terminus, the 104-residue chain is uncharacterized protein (104 aa).

The helical transmembrane segment at 80–98 (GSSLPLFDLVFILLSTFFL) threads the bilayer.

It is found in the membrane. This is an uncharacterized protein from Saccharomyces cerevisiae (strain ATCC 204508 / S288c) (Baker's yeast).